A 265-amino-acid polypeptide reads, in one-letter code: UPF0354 protein ABC2771 (265 aa).

It belongs to the UPF0354 family.

The chain is UPF0354 protein ABC2771 from Shouchella clausii (strain KSM-K16) (Alkalihalobacillus clausii).